A 433-amino-acid chain; its full sequence is Tol-Pal system protein TolB (433 aa).

Positions 1–21 are cleaved as a signal peptide; the sequence is MRNLLRGMLVVICCMAGIVMA.

The protein belongs to the TolB family. In terms of assembly, the Tol-Pal system is composed of five core proteins: the inner membrane proteins TolA, TolQ and TolR, the periplasmic protein TolB and the outer membrane protein Pal. They form a network linking the inner and outer membranes and the peptidoglycan layer.

It localises to the periplasm. In terms of biological role, part of the Tol-Pal system, which plays a role in outer membrane invagination during cell division and is important for maintaining outer membrane integrity. The polypeptide is Tol-Pal system protein TolB (Pseudomonas fluorescens (strain Pf0-1)).